Reading from the N-terminus, the 243-residue chain is Uridylate kinase (243 aa).

15–18 (KLSG) contacts ATP. Residues 23–28 (GSEGFG) are involved in allosteric activation by GTP. Gly-57 contacts UMP. Residues Gly-58 and Arg-62 each coordinate ATP. UMP is bound by residues Asp-77 and 138–145 (TGNPFFTT). ATP is bound by residues Thr-165, Tyr-171, and Asp-174.

This sequence belongs to the UMP kinase family. Homohexamer.

The protein resides in the cytoplasm. It carries out the reaction UMP + ATP = UDP + ADP. Its pathway is pyrimidine metabolism; CTP biosynthesis via de novo pathway; UDP from UMP (UMPK route): step 1/1. Its activity is regulated as follows. Allosterically activated by GTP. Inhibited by UTP. Catalyzes the reversible phosphorylation of UMP to UDP. This chain is Uridylate kinase, found in Vibrio cholerae serotype O1 (strain ATCC 39541 / Classical Ogawa 395 / O395).